A 542-amino-acid polypeptide reads, in one-letter code: Signal peptide peptidase-like 5 (542 aa).

The first 23 residues, 1-23, serve as a signal peptide directing secretion; sequence MAAATAAVFALLMASALAGAAAG. Over 24-192 the chain is Lumenal; that stretch reads GDIVHHDDEA…PDRPVVDTAE (169 aa). 2 N-linked (GlcNAc...) asparagine glycosylation sites follow: Asn-79 and Asn-145. Residues 92–167 form the PA domain; sequence CTSPKEKVSG…LPRDAGFALH (76 aa). The chain crosses the membrane as a helical span at residues 193–213; sequence VFLWLMAVGTVLCASYWSAWS. Residues 214–245 lie on the Cytoplasmic side of the membrane; it reads AREALCEQEKLLKDGREVLLNVENGSSSGMID. Residues 246–266 form a helical membrane-spanning segment; the sequence is INVASAIMFVVVASCFLIMLY. Residues 267 to 275 are Lumenal-facing; it reads KMMSSWFVE. Residues 276 to 296 form a helical membrane-spanning segment; the sequence is LLVVIFCVGGVEGLQTCLVAL. Topologically, residues 297-316 are cytoplasmic; it reads LSRWFRAASESFFKVPFFGA. The chain crosses the membrane as a helical span at residues 317–337; it reads VSYLTLAVSPFCIVFAVLWAV. Over 338–342 the chain is Lumenal; that stretch reads HRHFT. A helical membrane pass occupies residues 343–363; that stretch reads YAWIGQDILGIALIITVIQIV. At 364–367 the chain is on the cytoplasmic side; that stretch reads RVPN. The helical transmembrane segment at 368-388 threads the bilayer; that stretch reads LKVGSVLLSCAFFYDIFWVFV. Residue Asp-382 is part of the active site. Residues 389–426 are Lumenal-facing; sequence SKRWFHESVMIVVARGDKTDEDGVPMLLKIPRMFDPWG. A helical transmembrane segment spans residues 427 to 447; that stretch reads GYSIIGFGDILLPGLLVAFAL. Asp-435 is an active-site residue. Residues 448-459 lie on the Cytoplasmic side of the membrane; the sequence is RYDWAAKKSLQT. A helical transmembrane segment spans residues 460–480; sequence GYFLWSMVAYGSGLLITYVAL. The Lumenal segment spans residues 481-486; it reads NLMDGH. The chain crosses the membrane as a helical span at residues 487–507; it reads GQPALLYIVPFTLGALISLGW. The PAL signature appears at 489 to 491; it reads PAL. At 508-542 the chain is on the cytoplasmic side; the sequence is KRGELWNLWSKGEPERVCPHHMHMQPQPKTPPLVQ.

This sequence belongs to the peptidase A22B family. In terms of processing, glycosylated.

Its subcellular location is the endosome membrane. Its function is as follows. Intramembrane-cleaving aspartic protease (I-CLiP) that cleaves type II membrane signal peptides in the hydrophobic plane of the membrane. This Oryza sativa subsp. japonica (Rice) protein is Signal peptide peptidase-like 5 (SPPL5).